Here is a 209-residue protein sequence, read N- to C-terminus: Superoxide dismutase [Mn/Fe] (209 aa).

His-38, His-90, Asp-172, and His-176 together coordinate Fe(3+). Residues His-38, His-90, Asp-172, and His-176 each coordinate Mn(2+).

Belongs to the iron/manganese superoxide dismutase family. Requires Mn(2+) as cofactor. Fe(3+) serves as cofactor.

The enzyme catalyses 2 superoxide + 2 H(+) = H2O2 + O2. Its function is as follows. Destroys superoxide anion radicals which are normally produced within the cells and which are toxic to biological systems. Catalyzes the dismutation of superoxide anion radicals into O2 and H2O2 by successive reduction and oxidation of the transition metal ion at the active site. The chain is Superoxide dismutase [Mn/Fe] (sodB) from Rickettsia prowazekii (strain Madrid E).